The primary structure comprises 240 residues: Probable transcriptional regulatory protein OEOE_0768 (240 aa).

Residues 1-21 (MSGHSKWHNIQGRKNAQDAKR) form a disordered region.

Belongs to the TACO1 family.

It is found in the cytoplasm. This is Probable transcriptional regulatory protein OEOE_0768 from Oenococcus oeni (strain ATCC BAA-331 / PSU-1).